Consider the following 330-residue polypeptide: tRNA-modifying protein YgfZ (330 aa).

Folate contacts are provided by Trp-28 and Trp-190.

It belongs to the tRNA-modifying YgfZ family.

The protein resides in the cytoplasm. In terms of biological role, folate-binding protein involved in regulating the level of ATP-DnaA and in the modification of some tRNAs. It is probably a key factor in regulatory networks that act via tRNA modification, such as initiation of chromosomal replication. The protein is tRNA-modifying protein YgfZ of Yersinia pseudotuberculosis serotype O:1b (strain IP 31758).